The primary structure comprises 257 residues: ATP synthase subunit a (257 aa).

Positions 1–4 (MFIT) are cleaved as a propeptide — removed in mature form. Helical transmembrane passes span 27–47 (FSNF…LAII), 58–78 (IVPQ…LNLV), 93–113 (YFPF…LRLI), 122–142 (QLIF…ILGL), 149–169 (VFGL…LVLI), 189–209 (IIAG…FMGL), 214–234 (FIIG…EFGI), and 236–256 (FIQA…SLNL).

This sequence belongs to the ATPase A chain family. In terms of assembly, F-type ATPases have 2 components, CF(1) - the catalytic core - and CF(0) - the membrane proton channel. CF(1) has five subunits: alpha(3), beta(3), gamma(1), delta(1), epsilon(1). CF(0) has three main subunits: a, b and c.

It localises to the mitochondrion inner membrane. Its function is as follows. Mitochondrial membrane ATP synthase (F(1)F(0) ATP synthase or Complex V) produces ATP from ADP in the presence of a proton gradient across the membrane which is generated by electron transport complexes of the respiratory chain. F-type ATPases consist of two structural domains, F(1) - containing the extramembraneous catalytic core and F(0) - containing the membrane proton channel, linked together by a central stalk and a peripheral stalk. During catalysis, ATP synthesis in the catalytic domain of F(1) is coupled via a rotary mechanism of the central stalk subunits to proton translocation. Key component of the proton channel; it may play a direct role in the translocation of protons across the membrane. In Schizosaccharomyces pombe (strain 972 / ATCC 24843) (Fission yeast), this protein is ATP synthase subunit a (atp6).